A 326-amino-acid chain; its full sequence is ATP-dependent 6-phosphofructokinase (326 aa).

ATP is bound at residue G14. 24-28 provides a ligand contact to ADP; that stretch reads RAVVR. Residues 75 to 76 and 105 to 108 each bind ATP; these read RF and GNGS. N106 serves as a coordination point for Mg(2+). 129–131 lines the substrate pocket; the sequence is TID. The active-site Proton acceptor is the D131. R158 serves as a coordination point for ADP. Residues R166 and 173–175 contribute to the substrate site; that span reads MGR. ADP-binding positions include 189–191, K215, and 216–218; these read GAE and KSA. Substrate contacts are provided by residues E225, R248, and 254-257; that span reads HTQR.

The protein belongs to the phosphofructokinase type A (PFKA) family. ATP-dependent PFK group I subfamily. Prokaryotic clade 'B1' sub-subfamily. As to quaternary structure, homotetramer. It depends on Mg(2+) as a cofactor.

The protein resides in the cytoplasm. It catalyses the reaction beta-D-fructose 6-phosphate + ATP = beta-D-fructose 1,6-bisphosphate + ADP + H(+). Its pathway is carbohydrate degradation; glycolysis; D-glyceraldehyde 3-phosphate and glycerone phosphate from D-glucose: step 3/4. With respect to regulation, allosterically activated by ADP and other diphosphonucleosides, and allosterically inhibited by phosphoenolpyruvate. In terms of biological role, catalyzes the phosphorylation of D-fructose 6-phosphate to fructose 1,6-bisphosphate by ATP, the first committing step of glycolysis. This chain is ATP-dependent 6-phosphofructokinase, found in Coxiella burnetii (strain RSA 493 / Nine Mile phase I).